Consider the following 367-residue polypeptide: Protein RIC-3 (367 aa).

The first 31 residues, Met1–Gly31, serve as a signal peptide directing secretion. The tract at residues Arg30–Phe67 is disordered. Residues Lys32–Leu95 are Lumenal-facing. Residues Met96 to Phe116 traverse the membrane as a helical segment. The Cytoplasmic portion of the chain corresponds to Lys117 to Glu367. Positions His138 to Pro169 form a coiled coil. Lys201 is modified (N6-acetyllysine; alternate). Lys201 is covalently cross-linked (Glycyl lysine isopeptide (Lys-Gly) (interchain with G-Cter in ubiquitin); alternate). Disordered regions lie at residues Gln262–Cys301 and Ala322–Glu367. Basic and acidic residues predominate over residues Ser271–Pro280. Residues Leu358–Glu367 are compositionally biased toward basic residues.

It belongs to the ric-3 family. Monomer and homodimer. Interacts with CHRNA7, CHRNA3, CHRNA4, CHRNB2, CHRNB4 and HTR3A. Expressed in brain, with highest levels in hippocampus, cerebellum and superior colliculus.

The protein localises to the endoplasmic reticulum membrane. Molecular chaperone which promotes the proper subunit assembly and surface trafficking of alpha-7 (CHRNA7) nicotinic acetylcholine receptor. Promotes the proper subunit assembly and cell surface expression of alpha-8 (CHRNA8) nicotinic acetylcholine receptor. May also promote functional expression of homomeric serotoninergic 5-HT3 receptors, and of heteromeric acetylcholine receptors alpha-3/beta-2, alpha-3/beta-4, alpha-4/beta-2 and alpha-4/beta-4. This is Protein RIC-3 (Ric3) from Mus musculus (Mouse).